We begin with the raw amino-acid sequence, 182 residues long: Large ribosomal subunit protein uL6 (182 aa).

Belongs to the universal ribosomal protein uL6 family. Part of the 50S ribosomal subunit.

This protein binds to the 23S rRNA, and is important in its secondary structure. It is located near the subunit interface in the base of the L7/L12 stalk, and near the tRNA binding site of the peptidyltransferase center. This chain is Large ribosomal subunit protein uL6, found in Haloquadratum walsbyi (strain DSM 16790 / HBSQ001).